A 484-amino-acid chain; its full sequence is Putative tyramine receptor 2 (484 aa).

The Extracellular segment spans residues 1–54 (MVRVELQAASLMNGSSAAEEPQDALVGGDACGGRRPPSVLGVRLAVPEWEVAVT). Asn13 carries an N-linked (GlcNAc...) asparagine glycan. Residues 55 to 77 (AVSLSLIILITIVGNVLVVLSVF) traverse the membrane as a helical segment. Over 78 to 87 (TYKPLRIVQN) the chain is Cytoplasmic. Residues 88–109 (FFIVSLAVADLTVAVLVMPFNV) traverse the membrane as a helical segment. Topologically, residues 110–126 (AYSLIQRWVFGIVVCKM) are extracellular. The cysteines at positions 124 and 203 are disulfide-linked. The helical transmembrane segment at 127–147 (WLTCDVLCCTASILNLCAIAL) threads the bilayer. The Cytoplasmic segment spans residues 148–167 (DRYWAITDPINYAQKRTLRR). A helical membrane pass occupies residues 168–190 (VLAMIAGVWLLSGVISSPPLIGW). Over 191–215 (NDWPMEFNDTTPCQLTEEQGYVIYS) the chain is Extracellular. An N-linked (GlcNAc...) asparagine glycan is attached at Asn198. The chain crosses the membrane as a helical span at residues 216–237 (SLGSFFIPLFIMTIVYVEIFIA). At 238-411 (TKRRLRERAK…LSKERRAART (174 aa)) the chain is on the cytoplasmic side. The segment covering 253–280 (SAMKQQMAAQAVPSSVPSHDQESVSSET) has biased composition (polar residues). Disordered regions lie at residues 253–322 (SAMK…PAMV) and 350–383 (TTTTTTTTTTTAVTDSPRSRTASQKGSTAPPTPV). Residues 295-306 (EKRRKTKKKSKK) show a composition bias toward basic residues. The span at 350–360 (TTTTTTTTTTT) shows a compositional bias: low complexity. Positions 361–378 (AVTDSPRSRTASQKGSTA) are enriched in polar residues. Residues 412–433 (LGIIMGVFVVCWLPFFLMYVIV) traverse the membrane as a helical segment. Topologically, residues 434 to 448 (PFCNPSCKPSPKLVN) are extracellular. A helical transmembrane segment spans residues 449–470 (FITWLGYINSALNPIIYTIFNL). The Cytoplasmic segment spans residues 471-484 (DFRRAFKKLLHFKT).

This sequence belongs to the G-protein coupled receptor 1 family.

The protein resides in the cell membrane. Functionally, G-protein coupled receptor for tyramine, a known neurotransmitter and neuromodulator and direct precursor of octopamine. The sequence is that of Putative tyramine receptor 2 (GCR2) from Locusta migratoria (Migratory locust).